Reading from the N-terminus, the 345-residue chain is Succinylglutamate desuccinylase (345 aa).

Residues His-64, Glu-67, and His-161 each contribute to the Zn(2+) site. Glu-225 is an active-site residue.

It belongs to the AspA/AstE family. Succinylglutamate desuccinylase subfamily. The cofactor is Zn(2+).

It catalyses the reaction N-succinyl-L-glutamate + H2O = L-glutamate + succinate. It participates in amino-acid degradation; L-arginine degradation via AST pathway; L-glutamate and succinate from L-arginine: step 5/5. Its function is as follows. Transforms N(2)-succinylglutamate into succinate and glutamate. This chain is Succinylglutamate desuccinylase, found in Shewanella pealeana (strain ATCC 700345 / ANG-SQ1).